The following is a 1178-amino-acid chain: DNA-directed RNA polymerase subunit beta' (1178 aa).

Zn(2+)-binding residues include Cys-60, Cys-62, Cys-75, and Cys-78. 3 residues coordinate Mg(2+): Asp-450, Asp-452, and Asp-454. Residues Cys-795, Cys-869, Cys-876, and Cys-879 each coordinate Zn(2+).

It belongs to the RNA polymerase beta' chain family. In terms of assembly, the RNAP catalytic core consists of 2 alpha, 1 beta, 1 beta' and 1 omega subunit. When a sigma factor is associated with the core the holoenzyme is formed, which can initiate transcription. Mg(2+) serves as cofactor. The cofactor is Zn(2+).

The catalysed reaction is RNA(n) + a ribonucleoside 5'-triphosphate = RNA(n+1) + diphosphate. In terms of biological role, DNA-dependent RNA polymerase catalyzes the transcription of DNA into RNA using the four ribonucleoside triphosphates as substrates. This Clostridium beijerinckii (strain ATCC 51743 / NCIMB 8052) (Clostridium acetobutylicum) protein is DNA-directed RNA polymerase subunit beta'.